The following is a 505-amino-acid chain: Deoxyguanosinetriphosphate triphosphohydrolase (505 aa).

The HD domain maps to R66–C273.

The protein belongs to the dGTPase family. Type 1 subfamily. Homotetramer. It depends on Mg(2+) as a cofactor.

The enzyme catalyses dGTP + H2O = 2'-deoxyguanosine + triphosphate + H(+). DGTPase preferentially hydrolyzes dGTP over the other canonical NTPs. The chain is Deoxyguanosinetriphosphate triphosphohydrolase from Shigella boydii serotype 4 (strain Sb227).